Consider the following 273-residue polypeptide: Rhamnulose-1-phosphate aldolase (273 aa).

E117 is an active-site residue. Residues H140, H142, and H211 each coordinate Zn(2+).

This sequence belongs to the aldolase class II family. RhaD subfamily. Requires Zn(2+) as cofactor.

The protein resides in the cytoplasm. The catalysed reaction is L-rhamnulose 1-phosphate = (S)-lactaldehyde + dihydroxyacetone phosphate. It participates in carbohydrate degradation; L-rhamnose degradation; glycerone phosphate from L-rhamnose: step 3/3. Functionally, catalyzes the reversible cleavage of L-rhamnulose-1-phosphate to dihydroxyacetone phosphate (DHAP) and L-lactaldehyde. The polypeptide is Rhamnulose-1-phosphate aldolase (Listeria monocytogenes serovar 1/2a (strain ATCC BAA-679 / EGD-e)).